The primary structure comprises 520 residues: Peptide chain release factor 3 (520 aa).

The region spanning 8–273 is the tr-type G domain; sequence ESRKTFAIIS…AYVDHAPMPN (266 aa). GTP is bound by residues 17 to 24, 85 to 89, and 139 to 142; these read SHPDAGKT, DTPGH, and NKLD.

This sequence belongs to the TRAFAC class translation factor GTPase superfamily. Classic translation factor GTPase family. PrfC subfamily.

It is found in the cytoplasm. Its function is as follows. Increases the formation of ribosomal termination complexes and stimulates activities of RF-1 and RF-2. It binds guanine nucleotides and has strong preference for UGA stop codons. It may interact directly with the ribosome. The stimulation of RF-1 and RF-2 is significantly reduced by GTP and GDP, but not by GMP. The polypeptide is Peptide chain release factor 3 (Staphylococcus carnosus (strain TM300)).